The chain runs to 833 residues: Leucine--tRNA ligase (833 aa).

A 'HIGH' region motif is present at residues 41–52; the sequence is PYPSGAGLHVGH. The short motif at 610–614 is the 'KMSKS' region element; it reads KMSKS. K613 is an ATP binding site.

Belongs to the class-I aminoacyl-tRNA synthetase family.

It localises to the cytoplasm. The enzyme catalyses tRNA(Leu) + L-leucine + ATP = L-leucyl-tRNA(Leu) + AMP + diphosphate. The polypeptide is Leucine--tRNA ligase (Streptococcus agalactiae serotype III (strain NEM316)).